We begin with the raw amino-acid sequence, 382 residues long: Serine protease 23 (382 aa).

Residues 1-22 form the signal peptide; sequence MAGIPGLFILLVLLCVFMQVSP. A glycan (N-linked (GlcNAc...) asparagine) is linked at Asn-92. The cysteines at positions 159 and 175 are disulfide-linked. Catalysis depends on His-174, which acts as the Charge relay system. N-linked (GlcNAc...) asparagine glycosylation occurs at Asn-206. Active-site charge relay system residues include Asp-239 and Ser-315.

Belongs to the peptidase S1 family.

It is found in the secreted. This chain is Serine protease 23 (Prss23), found in Mus musculus (Mouse).